A 416-amino-acid chain; its full sequence is Enolase (416 aa).

Gln162 is a binding site for (2R)-2-phosphoglycerate. Residue Glu204 is the Proton donor of the active site. Residues Asp241, Glu282, and Asp309 each contribute to the Mg(2+) site. (2R)-2-phosphoglycerate-binding residues include Lys334, Arg363, Ser364, and Lys385. Lys334 serves as the catalytic Proton acceptor.

This sequence belongs to the enolase family. Mg(2+) is required as a cofactor.

The protein resides in the cytoplasm. The protein localises to the secreted. It localises to the cell surface. It catalyses the reaction (2R)-2-phosphoglycerate = phosphoenolpyruvate + H2O. Its pathway is carbohydrate degradation; glycolysis; pyruvate from D-glyceraldehyde 3-phosphate: step 4/5. Its function is as follows. Catalyzes the reversible conversion of 2-phosphoglycerate (2-PG) into phosphoenolpyruvate (PEP). It is essential for the degradation of carbohydrates via glycolysis. The chain is Enolase from Campylobacter concisus (strain 13826).